Here is a 713-residue protein sequence, read N- to C-terminus: Ribosomal RNA large subunit methyltransferase K/L (713 aa).

A THUMP domain is found at 46–157 (TAYRICLWSR…RDQATLSLDL (112 aa)).

The protein belongs to the methyltransferase superfamily. RlmKL family.

The protein localises to the cytoplasm. The catalysed reaction is guanosine(2445) in 23S rRNA + S-adenosyl-L-methionine = N(2)-methylguanosine(2445) in 23S rRNA + S-adenosyl-L-homocysteine + H(+). The enzyme catalyses guanosine(2069) in 23S rRNA + S-adenosyl-L-methionine = N(2)-methylguanosine(2069) in 23S rRNA + S-adenosyl-L-homocysteine + H(+). Functionally, specifically methylates the guanine in position 2445 (m2G2445) and the guanine in position 2069 (m7G2069) of 23S rRNA. This Syntrophotalea carbinolica (strain DSM 2380 / NBRC 103641 / GraBd1) (Pelobacter carbinolicus) protein is Ribosomal RNA large subunit methyltransferase K/L.